The sequence spans 133 residues: Ribosome-binding factor A (133 aa).

This sequence belongs to the RbfA family. Monomer. Binds 30S ribosomal subunits, but not 50S ribosomal subunits or 70S ribosomes.

Its subcellular location is the cytoplasm. Its function is as follows. One of several proteins that assist in the late maturation steps of the functional core of the 30S ribosomal subunit. Associates with free 30S ribosomal subunits (but not with 30S subunits that are part of 70S ribosomes or polysomes). Required for efficient processing of 16S rRNA. May interact with the 5'-terminal helix region of 16S rRNA. The protein is Ribosome-binding factor A of Salmonella typhi.